Consider the following 95-residue polypeptide: Synaptobrevin-A (95 aa).

Residues 1–70 (MSEPVNKVKQ…KRLMWCRNIK (70 aa)) lie on the Cytoplasmic side of the membrane. The 61-residue stretch at 7-67 (KVKQTQQQVD…NEIKRLMWCR (61 aa)) folds into the v-SNARE coiled-coil homology domain. A helical; Anchor for type IV membrane protein transmembrane segment spans residues 71–91 (LTLIIIAVVVLLLVVIIVPIV). Topologically, residues 92 to 95 (LKFT) are vesicular.

This sequence belongs to the synaptobrevin family.

The protein localises to the cytoplasmic vesicle. The protein resides in the secretory vesicle membrane. Functionally, involved in the targeting and/or fusion of transport vesicles to their target membrane. The sequence is that of Synaptobrevin-A (sybA) from Dictyostelium discoideum (Social amoeba).